A 254-amino-acid chain; its full sequence is Imidazole glycerol phosphate synthase subunit HisF (254 aa).

Residues aspartate 12 and aspartate 131 contribute to the active site.

This sequence belongs to the HisA/HisF family. As to quaternary structure, heterodimer of HisH and HisF.

Its subcellular location is the cytoplasm. The enzyme catalyses 5-[(5-phospho-1-deoxy-D-ribulos-1-ylimino)methylamino]-1-(5-phospho-beta-D-ribosyl)imidazole-4-carboxamide + L-glutamine = D-erythro-1-(imidazol-4-yl)glycerol 3-phosphate + 5-amino-1-(5-phospho-beta-D-ribosyl)imidazole-4-carboxamide + L-glutamate + H(+). Its pathway is amino-acid biosynthesis; L-histidine biosynthesis; L-histidine from 5-phospho-alpha-D-ribose 1-diphosphate: step 5/9. IGPS catalyzes the conversion of PRFAR and glutamine to IGP, AICAR and glutamate. The HisF subunit catalyzes the cyclization activity that produces IGP and AICAR from PRFAR using the ammonia provided by the HisH subunit. The chain is Imidazole glycerol phosphate synthase subunit HisF from Frankia casuarinae (strain DSM 45818 / CECT 9043 / HFP020203 / CcI3).